The primary structure comprises 201 residues: Small ribosomal subunit protein uS4c (201 aa).

The interval 20-44 (GLTNKKPRAGSDLRNQSRSGKKSQY) is disordered. Positions 89–150 (MRLDNILFRL…EQKSKALIQI (62 aa)) constitute an S4 RNA-binding domain.

Belongs to the universal ribosomal protein uS4 family. In terms of assembly, part of the 30S ribosomal subunit. Contacts protein S5. The interaction surface between S4 and S5 is involved in control of translational fidelity.

Its subcellular location is the plastid. It localises to the chloroplast. One of the primary rRNA binding proteins, it binds directly to 16S rRNA where it nucleates assembly of the body of the 30S subunit. Functionally, with S5 and S12 plays an important role in translational accuracy. The sequence is that of Small ribosomal subunit protein uS4c (rps4) from Nicotiana tomentosiformis (Tobacco).